The chain runs to 198 residues: Inner membrane-spanning protein YciB (198 aa).

The next 5 helical transmembrane spans lie at 36–56 (IYSA…ALFL), 64–84 (GQLL…AFHS), 90–110 (WKAP…HFIG), 135–155 (VAWI…AFTF), and 162–182 (FKVF…GVYL).

It belongs to the YciB family.

It localises to the cell inner membrane. Functionally, plays a role in cell envelope biogenesis, maintenance of cell envelope integrity and membrane homeostasis. The polypeptide is Inner membrane-spanning protein YciB (Pseudomonas entomophila (strain L48)).